The chain runs to 660 residues: Acetyl-coenzyme A synthetase (660 aa).

Residues 197–200 (RGGK) and threonine 317 contribute to the CoA site. ATP-binding positions include 397 to 399 (GEP), 421 to 426 (DTFWQT), aspartate 512, and arginine 528. A CoA-binding site is contributed by serine 536. Arginine 539 provides a ligand contact to ATP. Mg(2+) is bound by residues valine 550 and valine 555. The residue at position 625 (lysine 625) is an N6-acetyllysine.

This sequence belongs to the ATP-dependent AMP-binding enzyme family. It depends on Mg(2+) as a cofactor. Acetylated. Deacetylation by the SIR2-homolog deacetylase activates the enzyme.

The enzyme catalyses acetate + ATP + CoA = acetyl-CoA + AMP + diphosphate. Functionally, catalyzes the conversion of acetate into acetyl-CoA (AcCoA), an essential intermediate at the junction of anabolic and catabolic pathways. AcsA undergoes a two-step reaction. In the first half reaction, AcsA combines acetate with ATP to form acetyl-adenylate (AcAMP) intermediate. In the second half reaction, it can then transfer the acetyl group from AcAMP to the sulfhydryl group of CoA, forming the product AcCoA. This Ralstonia nicotianae (strain ATCC BAA-1114 / GMI1000) (Ralstonia solanacearum) protein is Acetyl-coenzyme A synthetase.